Reading from the N-terminus, the 181-residue chain is MMLPRSMKFMTGRRIFHTATVRAFQSTAKKSLTIPFLPVLPQKPGGVRGTPNDAYVPPPENKLEGSYHWYMEKIFALSVVPLATTAMLTTGPLSTAADSFFSVMLLGYCYMEFNSCITDYISERVYGVWHKYAMYMLGLGSAVSLFGIYKLETENDGVVGLVKSLWDSSEKDNSQKIEAKK.

The N-terminal 31 residues, 1–31, are a transit peptide targeting the mitochondrion; sequence MMLPRSMKFMTGRRIFHTATVRAFQSTAKKS. The Mitochondrial matrix portion of the chain corresponds to 32-66; it reads LTIPFLPVLPQKPGGVRGTPNDAYVPPPENKLEGS. The chain crosses the membrane as a helical span at residues 67–88; that stretch reads YHWYMEKIFALSVVPLATTAML. Topologically, residues 89-98 are mitochondrial intermembrane; it reads TTGPLSTAAD. The chain crosses the membrane as a helical span at residues 99 to 118; that stretch reads SFFSVMLLGYCYMEFNSCIT. Cysteine 109 provides a ligand contact to heme. At 119-127 the chain is on the mitochondrial matrix side; sequence DYISERVYG. Tyrosine 120 is a binding site for a ubiquinone. A helical membrane pass occupies residues 128–148; the sequence is VWHKYAMYMLGLGSAVSLFGI. The Mitochondrial intermembrane segment spans residues 149–181; the sequence is YKLETENDGVVGLVKSLWDSSEKDNSQKIEAKK.

The protein belongs to the CybS family. As to quaternary structure, forms part of complex II containing four subunits: a flavoprotein (FP), an iron-sulfur protein (IP) and a cytochrome b composed of a large and a small subunit.

It localises to the mitochondrion inner membrane. The protein operates within carbohydrate metabolism; tricarboxylic acid cycle. Membrane-anchoring subunit of succinate dehydrogenase (SDH) that is involved in system II of the mitochondrial electron transport chain and is responsible for transferring electrons from succinate to ubiquinone (coenzyme Q). SDH3 and SDH4 form the membrane dimer that anchors the catalytic dimer formed by SDH1 and SDH2 to the matrix surface of the mitochondrial inner membrane. Electrons originating from the catalytic dimer enter the membrane dimer for ubiquinone reduction. In Saccharomyces cerevisiae (strain ATCC 204508 / S288c) (Baker's yeast), this protein is Succinate dehydrogenase [ubiquinone] cytochrome b small subunit, mitochondrial (SDH4).